The chain runs to 264 residues: uncharacterized protein (264 aa).

A helical membrane pass occupies residues Leu9 to Ile29.

The protein resides in the membrane. This is an uncharacterized protein from Ureaplasma parvum serovar 3 (strain ATCC 700970).